The following is a 399-amino-acid chain: Argininosuccinate synthase (399 aa).

8–16 (AYSGGLDTS) contacts ATP. Tyrosine 87 contributes to the L-citrulline binding site. Glycine 117 contributes to the ATP binding site. Residues threonine 119, asparagine 123, and aspartate 124 each contribute to the L-aspartate site. L-citrulline is bound at residue asparagine 123. 4 residues coordinate L-citrulline: arginine 127, serine 175, glutamate 260, and tyrosine 272.

This sequence belongs to the argininosuccinate synthase family. Type 1 subfamily. As to quaternary structure, homotetramer.

It localises to the cytoplasm. The enzyme catalyses L-citrulline + L-aspartate + ATP = 2-(N(omega)-L-arginino)succinate + AMP + diphosphate + H(+). Its pathway is amino-acid biosynthesis; L-arginine biosynthesis; L-arginine from L-ornithine and carbamoyl phosphate: step 2/3. The chain is Argininosuccinate synthase from Rhodococcus jostii (strain RHA1).